Here is a 445-residue protein sequence, read N- to C-terminus: MASLTPKDIVSELNRHIVGQDAAKRAVALALRTRWRRMQLPEEMRAEVAPKNILMIGPTGVGKTEIARRLAKLADAPFIKVEATKFTEVGYVGRDVESIIRDLMEVAIKLLRDKEIARVGSQADDAAEERILDALLPPARTDDSSANTDNSTRQIFRKKLREGELDDKEIDVDVASNPAGIDIMAPPGMEEMTSQLQQMFSKMGNNQQRKSQKLKVREAYRLIRDEEAARFVNEDELKVQAIDAVENSGIVFIDEIDKVAKRGEGGGTDVSREGVQRDLLPLIEGSTVSTKYGMVKTDHILFIASGAFHLSRPSDLIPELQGRLPIRVELSPLSPDDFQRILTEPKCSLTEQYKALLETEGLNLEITDDCIRRIAEVAWQVNERTENIGARRLHTVLEKLLEEISFDADSLATQYHDKPLVLDAEAVDRYLGELADDEDLSRYIL.

Residues V18, 60 to 65 (GVGKTE), D254, E319, and R391 each bind ATP.

Belongs to the ClpX chaperone family. HslU subfamily. In terms of assembly, a double ring-shaped homohexamer of HslV is capped on each side by a ring-shaped HslU homohexamer. The assembly of the HslU/HslV complex is dependent on binding of ATP.

Its subcellular location is the cytoplasm. ATPase subunit of a proteasome-like degradation complex; this subunit has chaperone activity. The binding of ATP and its subsequent hydrolysis by HslU are essential for unfolding of protein substrates subsequently hydrolyzed by HslV. HslU recognizes the N-terminal part of its protein substrates and unfolds these before they are guided to HslV for hydrolysis. This Alcanivorax borkumensis (strain ATCC 700651 / DSM 11573 / NCIMB 13689 / SK2) protein is ATP-dependent protease ATPase subunit HslU.